A 95-amino-acid polypeptide reads, in one-letter code: Aspartyl/glutamyl-tRNA(Asn/Gln) amidotransferase subunit C (95 aa).

This sequence belongs to the GatC family. Heterotrimer of A, B and C subunits.

It carries out the reaction L-glutamyl-tRNA(Gln) + L-glutamine + ATP + H2O = L-glutaminyl-tRNA(Gln) + L-glutamate + ADP + phosphate + H(+). The catalysed reaction is L-aspartyl-tRNA(Asn) + L-glutamine + ATP + H2O = L-asparaginyl-tRNA(Asn) + L-glutamate + ADP + phosphate + 2 H(+). Allows the formation of correctly charged Asn-tRNA(Asn) or Gln-tRNA(Gln) through the transamidation of misacylated Asp-tRNA(Asn) or Glu-tRNA(Gln) in organisms which lack either or both of asparaginyl-tRNA or glutaminyl-tRNA synthetases. The reaction takes place in the presence of glutamine and ATP through an activated phospho-Asp-tRNA(Asn) or phospho-Glu-tRNA(Gln). This chain is Aspartyl/glutamyl-tRNA(Asn/Gln) amidotransferase subunit C, found in Caulobacter sp. (strain K31).